A 201-amino-acid polypeptide reads, in one-letter code: Large ribosomal subunit protein uL4 (201 aa).

The interval 44 to 71 (RAQKTRAEVTGSGKKPWRQKGTGRARSG) is disordered.

The protein belongs to the universal ribosomal protein uL4 family. As to quaternary structure, part of the 50S ribosomal subunit.

In terms of biological role, one of the primary rRNA binding proteins, this protein initially binds near the 5'-end of the 23S rRNA. It is important during the early stages of 50S assembly. It makes multiple contacts with different domains of the 23S rRNA in the assembled 50S subunit and ribosome. Forms part of the polypeptide exit tunnel. This chain is Large ribosomal subunit protein uL4, found in Escherichia fergusonii (strain ATCC 35469 / DSM 13698 / CCUG 18766 / IAM 14443 / JCM 21226 / LMG 7866 / NBRC 102419 / NCTC 12128 / CDC 0568-73).